The following is a 159-amino-acid chain: Endoribonuclease YbeY (159 aa).

Zn(2+) contacts are provided by His114, His118, and His124.

The protein belongs to the endoribonuclease YbeY family. The cofactor is Zn(2+).

The protein resides in the cytoplasm. Its function is as follows. Single strand-specific metallo-endoribonuclease involved in late-stage 70S ribosome quality control and in maturation of the 3' terminus of the 16S rRNA. The chain is Endoribonuclease YbeY from Pectobacterium atrosepticum (strain SCRI 1043 / ATCC BAA-672) (Erwinia carotovora subsp. atroseptica).